A 155-amino-acid polypeptide reads, in one-letter code: Probable Brix domain-containing ribosomal biogenesis protein (155 aa).

Residues 1–155 (MLITSSRKPS…KNYRKMVMSE (155 aa)) enclose the Brix domain.

In terms of biological role, probably involved in the biogenesis of the ribosome. The sequence is that of Probable Brix domain-containing ribosomal biogenesis protein from Methanococcoides burtonii (strain DSM 6242 / NBRC 107633 / OCM 468 / ACE-M).